A 670-amino-acid chain; its full sequence is DNA ligase (670 aa).

Residues Asp-36–Asp-40, Ser-85–Leu-86, and Glu-116 each bind NAD(+). Lys-118 functions as the N6-AMP-lysine intermediate in the catalytic mechanism. Residues Arg-139, Glu-174, Lys-290, and Lys-314 each coordinate NAD(+). Positions 408, 411, 426, and 431 each coordinate Zn(2+). Residues Ser-591–Gln-670 form the BRCT domain.

The protein belongs to the NAD-dependent DNA ligase family. LigA subfamily. Mg(2+) serves as cofactor. The cofactor is Mn(2+).

It catalyses the reaction NAD(+) + (deoxyribonucleotide)n-3'-hydroxyl + 5'-phospho-(deoxyribonucleotide)m = (deoxyribonucleotide)n+m + AMP + beta-nicotinamide D-nucleotide.. Functionally, DNA ligase that catalyzes the formation of phosphodiester linkages between 5'-phosphoryl and 3'-hydroxyl groups in double-stranded DNA using NAD as a coenzyme and as the energy source for the reaction. It is essential for DNA replication and repair of damaged DNA. This is DNA ligase from Desulforamulus reducens (strain ATCC BAA-1160 / DSM 100696 / MI-1) (Desulfotomaculum reducens).